The following is a 136-amino-acid chain: Large ribosomal subunit protein uL16 (136 aa).

The protein belongs to the universal ribosomal protein uL16 family. In terms of assembly, part of the 50S ribosomal subunit.

In terms of biological role, binds 23S rRNA and is also seen to make contacts with the A and possibly P site tRNAs. This is Large ribosomal subunit protein uL16 from Rickettsia canadensis (strain McKiel).